We begin with the raw amino-acid sequence, 895 residues long: Dystroglycan 1 (895 aa).

The signal sequence occupies residues 1–29 (MRMSVGSAVPLPLWGRTFLLLLSVAVTQS). The segment at 30 to 408 (HWPSEPSEAV…SQIRPTMTIP (379 aa)) is required for laminin recognition. The interval 49 to 71 (SMHSALSDLHETVPTVVGIPDGT) is O-glycosylated at one site. Asn141 carries N-linked (GlcNAc...) asparagine glycosylation. Cys182 and Cys264 are disulfide-bonded. Residues 316–485 (ATPTPVTAIG…PATRMRTTTS (170 aa)) form a mucin-like domain region. O-linked (Man6P...) threonine glycosylation is found at Thr317, Thr319, and Thr379. Residues 381-500 (TLGPIQPTRV…GEPNQRPELK (120 aa)) are disordered. Residues 393–403 (AGTTVPSQIRP) are compositionally biased toward polar residues. Positions 413–447 (PSTVTTPPTTTTKKPRVSTPRPATPSTDSSTTTTR) are enriched in low complexity. Residues 463-485 (TTKAPITRLETASPATRMRTTTS) form an O-glycosylated at seven sites with GalNAc region. Residues 603 to 712 (KAPARFKAKL…MSITVTGSGS (110 aa)) enclose the Peptidase S72 domain. 3 N-linked (GlcNAc...) asparagine glycosylation sites follow: Asn641, Asn649, and Asn661. The Extracellular segment spans residues 654 to 749 (SIVVEWTNNT…DPEKSSEDDV (96 aa)). A disulfide bond links Cys669 and Cys713. Positions 724–747 (PMRVPSEAPATEVPDRDPEKSSED) are disordered. Over residues 736–747 (VPDRDPEKSSED) the composition is skewed to basic and acidic residues. Residues 750 to 775 (YLHTVIPAVVVAAILLIAGIIAMICY) form a helical membrane-spanning segment. Residues 776-782 (RKKRKGK) carry the Nuclear localization signal motif. The Cytoplasmic portion of the chain corresponds to 776–895 (RKKRKGKLTL…YRSPPPYVPP (120 aa)). At Thr790 the chain carries Phosphothreonine. The segment at 819–895 (LQEEKAPLPP…YRSPPPYVPP (77 aa)) is required for interaction with CAV3. A disordered region spans residues 823-895 (KAPLPPPEYP…YRSPPPYVPP (73 aa)). Positions 832 to 846 (PNQSMPETTPLNQDT) are enriched in polar residues. Residues 859–870 (SAPPYQPPPPFT) are compositionally biased toward pro residues. A required for binding DMD and UTRN region spans residues 880–895 (PKNMTPYRSPPPYVPP). Residues 889 to 892 (PPPY) carry the PPXY motif motif. Residue Tyr892 is modified to Phosphotyrosine; by SRC.

As to quaternary structure, monomer. Heterodimer of alpha- and beta-dystroglycan subunits which are the central components of the dystrophin-glycoprotein complex. This complex then can form a dystrophin-associated glycoprotein complex (DGC) which is composed of three subcomplexes: a cytoplasmic complex comprised of DMD (or UTRN), DTNA and a number of syntrophins, such as SNTB1, SNTB2, SNTG1 and SNTG2, the transmembrane dystroglycan complex, and the sarcoglycan-sarcospan complex. Interacts (via the N-terminal of alphaDAG1) with LARGE1; the interaction enhances laminin binding. Interacts with SGCD. Interacts with AGR2 and AGR3. Interacts (betaDAG1) with DMD; the interaction is inhibited by phosphorylation on the PPXY motif. Interacts (betaDAG1, via its PPXY motif) with UTRN (via its WWW and ZZ domains); the interaction is inhibited by phosphorylation on the PPXY motif. Interacts (betaDAG1, via its phosphorylated PPXY motif) with the SH2 domain-containing proteins, FYN, CSK, NCK and SHC. Interacts (betaDAG1) with CAV3 (via a central WW-like domain); the interaction disrupts the binding of DMD. BetaDAG1 directly interacts with ANK3, but not with ANK2; this interaction does not interfere with DMD-binding and is required for retention at costameres. Identified in a dystroglycan complex that contains at least PRX, DRP2, UTRN, DMD and DAG1. Interacts with POMGNT1. BetaDAG1 interacts with CD93. In terms of processing, O-glycosylated. POMGNT1 catalyzes the initial addition of N-acetylglucosamine, giving rise to the GlcNAc(beta1-2)Man(alpha1-)O-Ser/Thr moiety and thus providing the necessary basis for the addition of further carbohydrate moieties. Heavily O-glycosylated comprising of up to two thirds of its mass and the carbohydrate composition differs depending on tissue type. Mucin-type O-glycosylation is important for ligand binding activity. O-mannosylation is found in high abundance in both brain and muscle where the most abundant glycan is Sia-alpha-2-3-Gal-beta-1-4-Glc-NAc-beta-1-2-Man. In muscle, glycosylation on Thr-317, Thr-319 and Thr-379 by a phosphorylated O-mannosyl glycan with the structure 2-(N-acetylamido)-2-deoxygalactosyl-beta-1,3-2-(N-acetylamido)-2-deoxyglucosyl-beta-1,4-6-phosphomannose is mediated by like-acetylglucosaminyltransferase (LARGE1) protein amd is required for laminin binding. O-glycosylated in the N-terminal region with a core 1 or possibly core 8 glycan. The brain form displays a unique glycosylation pattern which is absent in other tissues; this form shows enhanced binding to laminin LAMA5 compared to the skeletal muscle form. N-glycosylated. Post-translationally, autolytic cleavage produces the alpha and beta subunits. In cutaneous cells, as well as in certain pathological conditions, shedding of beta-dystroglycan can occur releasing a peptide of about 30 kDa. In terms of processing, SRC-mediated phosphorylation of the PPXY motif of the beta subunit recruits SH2 domain-containing proteins, but inhibits binding to WWW domain-containing proteins, DMD and UTRN. This phosphorylation also inhibits nuclear entry. Expressed in brain (at protein level). Expressed in the myelin sheath of peripheral nerves.

It is found in the secreted. It localises to the extracellular space. The protein resides in the cell membrane. Its subcellular location is the cytoplasm. The protein localises to the cytoskeleton. It is found in the nucleus. It localises to the nucleoplasm. The protein resides in the sarcolemma. Its subcellular location is the postsynaptic cell membrane. The dystroglycan complex is involved in a number of processes including laminin and basement membrane assembly, sarcolemmal stability, cell survival, peripheral nerve myelination, nodal structure, cell migration, and epithelial polarization. In terms of biological role, extracellular peripheral glycoprotein that acts as a receptor for extracellular matrix proteins containing laminin-G domains. Receptor for laminin-2 (LAMA2) and agrin in peripheral nerve Schwann cells. Also acts as a receptor for laminin LAMA5. Functionally, transmembrane protein that plays important roles in connecting the extracellular matrix to the cytoskeleton. Acts as a cell adhesion receptor in both muscle and non-muscle tissues. Receptor for both DMD and UTRN and, through these interactions, scaffolds axin to the cytoskeleton. Also functions in cell adhesion-mediated signaling and implicated in cell polarity. The protein is Dystroglycan 1 of Bos taurus (Bovine).